A 637-amino-acid polypeptide reads, in one-letter code: Probable ATP-binding protein YheS (637 aa).

ABC transporter domains are found at residues Ile2–Gln246 and Leu313–Asn527. Residues Gly34–Ser41 and Gly345–Ser352 each bind ATP. Residues Gln523 to Pro559 form a disordered region. Over residues Ala542–Leu553 the composition is skewed to basic and acidic residues.

The protein belongs to the ABC transporter superfamily. ABCF family. YheS subfamily.

Its function is as follows. Genetic data indicate it may be involved in ribosome assembly or function. Ectopic expression exacerbates the cold-sensitive growth phenotype of a bipA deletion. This chain is Probable ATP-binding protein YheS (yheS), found in Escherichia coli O6:H1 (strain CFT073 / ATCC 700928 / UPEC).